Here is a 584-residue protein sequence, read N- to C-terminus: Zinc finger and BTB domain-containing protein 7A (584 aa).

A BTB domain is found at 34–101; the sequence is CDVVILVEGR…AYTATLTVST (68 aa). Residues 220–313 form a disordered region; it reads YGPGPPAERP…EDGDGPDVDG (94 aa). The segment at 277-584 is mediates interaction with KHDRBS1; that stretch reads EEEAASLSEA…TDGNFTAGLA (308 aa). Positions 281–290 are enriched in low complexity; it reads ASLSEAAPEP. Phosphoserine occurs at positions 337 and 341. The mediates interaction with RELA stretch occupies residues 349-584; that stretch reads MDYYLKYFSG…TDGNFTAGLA (236 aa). The interval 377-584 is mediates interaction with SMAD4; the sequence is RAKAFQKCPI…TDGNFTAGLA (208 aa). C2H2-type zinc fingers lie at residues 382-404 and 410-432; these read QKCP…IRTH and YECN…MRKH. A Glycyl lysine isopeptide (Lys-Gly) (interchain with G-Cter in SUMO2) cross-link involves residue Lys436. Residues 438-460 form a C2H2-type 3 zinc finger; it reads YLCQQCGAAFAHNYDLKNHMRVH. The C2H2-type 4; atypical zinc finger occupies 466–490; it reads YQCDSCCKTFVRSDHLHRHLKKDGC. The segment at 486-584 is disordered; the sequence is KKDGCNGVPS…TDGNFTAGLA (99 aa). Over residues 505 to 527 the composition is skewed to low complexity; sequence GGAPDPSPGATATPGAPAQPSSP. 3 positions are modified to phosphoserine: Ser511, Ser525, and Ser526. A compositionally biased stretch (basic and acidic residues) spans 528-540; sequence DARRNGQEKHFKD. Lys539 is covalently cross-linked (Glycyl lysine isopeptide (Lys-Gly) (interchain with G-Cter in SUMO2)). A Phosphoserine modification is found at Ser549. The span at 560–572 shows a compositional bias: gly residues; sequence GAGGGGDSGGGPG.

As to quaternary structure, homodimer. Interacts with BCL6. Interacts with RELA; involved in the control by RELA of the accessibility of target gene promoters. Interacts with AR (via NR LBD domain); the interaction is direct and androgen-dependent. Interacts with NCOR1. Interacts with NCOR2. Interacts with SMAD4; the interaction is direct and stimulated by TGFB1. Interacts with HDAC1. Interacts with SP1; ZBTB7A prevents the binding to GC-rich motifs in promoters and represses the transcriptional activity of SP1. Interacts with the DNA-dependent protein kinase complex/DNA-PKc. Interacts with KHDRBS1; negatively regulates KHDRBS1 splicing activity. Post-translationally, sumoylated. Undergoes sumoylation with SUMO1 that may regulate its transcriptional activity. In terms of tissue distribution, widely expressed. In normal thymus, expressed in medullary epithelial cells and Hassle's corpuscles (at protein level). In tonsil, expressed in squamous epithelium and germinal center lymphocytes (at protein level). Up-regulated in a subset of lymphomas, as well as in a subset of breast, lung, colon, prostate and bladder carcinomas (at protein level). Expressed in adipose tissues.

The protein localises to the nucleus. In terms of biological role, transcription factor that represses the transcription of a wide range of genes involved in cell proliferation and differentiation. Directly and specifically binds to the consensus sequence 5'-[GA][CA]GACCCCCCCCC-3' and represses transcription both by regulating the organization of chromatin and through the direct recruitment of transcription factors to gene regulatory regions. Negatively regulates SMAD4 transcriptional activity in the TGF-beta signaling pathway through these two mechanisms. That is, recruits the chromatin regulator HDAC1 to the SMAD4-DNA complex and in parallel prevents the recruitment of the transcriptional activators CREBBP and EP300. Collaborates with transcription factors like RELA to modify the accessibility of gene transcription regulatory regions to secondary transcription factors. Also directly interacts with transcription factors like SP1 to prevent their binding to DNA. Functions as an androgen receptor/AR transcriptional corepressor by recruiting NCOR1 and NCOR2 to the androgen response elements/ARE on target genes. Thereby, negatively regulates androgen receptor signaling and androgen-induced cell proliferation. Involved in the switch between fetal and adult globin expression during erythroid cells maturation. Through its interaction with the NuRD complex regulates chromatin at the fetal globin genes to repress their transcription. Specifically represses the transcription of the tumor suppressor ARF isoform from the CDKN2A gene. Efficiently abrogates E2F1-dependent CDKN2A transactivation. Regulates chondrogenesis through the transcriptional repression of specific genes via a mechanism that also requires histone deacetylation. Regulates cell proliferation through the transcriptional regulation of genes involved in glycolysis. Involved in adipogenesis through the regulation of genes involved in adipocyte differentiation. Plays a key role in the differentiation of lymphoid progenitors into B and T lineages. Promotes differentiation towards the B lineage by inhibiting the T-cell instructive Notch signaling pathway through the specific transcriptional repression of Notch downstream target genes. Also regulates osteoclast differentiation. May also play a role, independently of its transcriptional activity, in double-strand break repair via classical non-homologous end joining/cNHEJ. Recruited to double-strand break sites on damage DNA, interacts with the DNA-dependent protein kinase complex and directly regulates its stability and activity in DNA repair. May also modulate the splicing activity of KHDRBS1 toward BCL2L1 in a mechanism which is histone deacetylase-dependent and thereby negatively regulates the pro-apoptotic effect of KHDRBS1. This chain is Zinc finger and BTB domain-containing protein 7A, found in Homo sapiens (Human).